The following is a 111-amino-acid chain: Cell division protein FtsL (111 aa).

Residues 1–26 (MAQARTEFSKVAAPRKLEEMYAQRGD) lie on the Cytoplasmic side of the membrane. Residues 27–47 (LFPYLLAVLVLLTLVSVFHVW) traverse the membrane as a helical segment. Residues 48 to 111 (SRVRVVDLNL…PTDQQVVVVK (64 aa)) are Periplasmic-facing. Positions 51 to 85 (RVVDLNLEVAEVARQLKVAQEEQNRLKLEVASLKT) form a coiled coil.

Belongs to the FtsL family.

Its subcellular location is the cell inner membrane. Functionally, essential cell division protein. The chain is Cell division protein FtsL from Geobacter sulfurreducens (strain ATCC 51573 / DSM 12127 / PCA).